A 255-amino-acid polypeptide reads, in one-letter code: MKQFTISIEELLFCFYSEGFFEQGMALKQAYFPEIEDEQLGALFEAACRSLLAKDAAEYRNHQYRLKDEYCPFIHVLNDADYTVKLSKFNGQGAEQNVSCHVSKFGTYSHELLFDEQVHRITKMESSEGLLAKTDEFLHIIDTEDKRESIVTLTSNEFEKLLEGASDNPSYLKEFLEKHDHQEDVTRFANDLALRKGKMDTLMRLAYGKDNTPEVADMAFVLPGAHHTWLVTGITQNEFSILPAHKDVVNQIISK.

This is an uncharacterized protein from Bacillus subtilis (strain 168).